The primary structure comprises 530 residues: UPF0422 protein lpg2959 (530 aa).

Residues 1–19 (MKFKKIILALACLSSPLYA) form the signal peptide. A coiled-coil region spans residues 20–66 (DQDQQLKSEIQRLQHQAEDLQAQLNRLQKQLANHKSSQQKHEQQAAA). The disordered stretch occupies residues 50-81 (LANHKSSQQKHEQQAAAKPAEPQSKPTVKSGA). Over residues 63–75 (QAAAKPAEPQSKP) the composition is skewed to low complexity.

Belongs to the UPF0422 family.

The polypeptide is UPF0422 protein lpg2959 (Legionella pneumophila subsp. pneumophila (strain Philadelphia 1 / ATCC 33152 / DSM 7513)).